Reading from the N-terminus, the 474-residue chain is MCVICFVKALVHVFKIYLTANYSYNFRSWPVDFRWDDLHVPGTNNSSHRALTCAAAAAGVWLLHDAALGEDALTRPPRGARSQVQCLLQQIRELPSQLASYALAHSLGRWLVYPGSMFLMTRALLPLLQQGQERLVDRYRGRRAKLVACDGNEIDTMFMDRRQHPGSHGRGLCLVICCEGNAGFYEMGCLSAPLEAGYSVLGWNHPGFGGSTGAPFPQHDANAMDVVVKYALHRLHFSPANVVVYGWSIGGFTATWATMTYPELGALVLDATFDDLVPLALKVMPQSWKGLVVRTVREHFNLNVAEQLCCYPGPVLLLRRTQDDVVSTSGHVPSLPSCQVEGDVEGNRGNELLLRLLEHRYPSVMAREGRTVVIRWLRASNLAQETALYARYHVDDEWCLATLRSYREGRQKDLDHTKTWGPHGPSFPWFVGQGLSARRRRHLALFLARRHLKNLEATHCSPLEPEDFQLPWRL.

Residues 175 to 293 form the AB hydrolase-1 domain; that stretch reads VICCEGNAGF…MPQSWKGLVV (119 aa). Residues S248, D323, and H423 each act as charge relay system in the active site.

This sequence belongs to the AB hydrolase superfamily. ABHD16 family.

It carries out the reaction a 1,2-diacyl-sn-glycero-3-phospho-L-serine + H2O = a 2-acyl-sn-glycero-3-phospho-L-serine + a fatty acid + H(+). It catalyses the reaction a 1-acylglycerol + H2O = glycerol + a fatty acid + H(+). The enzyme catalyses 1-(9Z-octadecenoyl)-glycerol + H2O = glycerol + (9Z)-octadecenoate + H(+). In terms of biological role, hydrolyzes the sn-1 position of glycerophospholipids with high specificity towards phosphatidylserine (PS), PS-PLA1 enzyme. Also hydrolyzes the acyl chain of glycerolipids with a preference for the monoacylglycerol (MAG) 1-acylglycerol, MAG lipase. Plays a regulatory role in cellular lipid homeostasis by modulating genes involved in neutral lipid degradation and in phospholipid synthesis and composition. The polypeptide is ABHD16B (Rattus norvegicus (Rat)).